Here is a 424-residue protein sequence, read N- to C-terminus: Serine--tRNA ligase 1 (424 aa).

Threonine 232–glutamate 234 contributes to the L-serine binding site. ATP is bound at residue arginine 263–glutamate 265. Glutamate 286 serves as a coordination point for L-serine. An ATP-binding site is contributed by glutamate 350–serine 353. Serine 386 is a binding site for L-serine.

Belongs to the class-II aminoacyl-tRNA synthetase family. Type-1 seryl-tRNA synthetase subfamily. In terms of assembly, homodimer. The tRNA molecule binds across the dimer.

The protein resides in the cytoplasm. It carries out the reaction tRNA(Ser) + L-serine + ATP = L-seryl-tRNA(Ser) + AMP + diphosphate + H(+). It catalyses the reaction tRNA(Sec) + L-serine + ATP = L-seryl-tRNA(Sec) + AMP + diphosphate + H(+). The protein operates within aminoacyl-tRNA biosynthesis; selenocysteinyl-tRNA(Sec) biosynthesis; L-seryl-tRNA(Sec) from L-serine and tRNA(Sec): step 1/1. In terms of biological role, catalyzes the attachment of serine to tRNA(Ser). Is also able to aminoacylate tRNA(Sec) with serine, to form the misacylated tRNA L-seryl-tRNA(Sec), which will be further converted into selenocysteinyl-tRNA(Sec). This Clostridium acetobutylicum (strain ATCC 824 / DSM 792 / JCM 1419 / IAM 19013 / LMG 5710 / NBRC 13948 / NRRL B-527 / VKM B-1787 / 2291 / W) protein is Serine--tRNA ligase 1.